Reading from the N-terminus, the 525-residue chain is Keratin, type I cytoskeletal 24 (525 aa).

Residues 1–30 (MSCSSRASSSRAGGSSSARVSAGGSSFSSG) are disordered. The segment at 1 to 139 (MSCSSRASSS…VGDGGLFSGG (139 aa)) is head. The segment at 140–175 (EKQTMQNLNDRLANYLDKVRALEEANTDLENKIKEW) is coil 1A. The region spanning 140 to 456 (EKQTMQNLND…RLLDGEGGGS (317 aa)) is the IF rod domain. The interval 176 to 198 (YDKYGPGSGDGGSGRDYSKYYSI) is linker 1. Residues 199–290 (IEDLRNQIIA…KNHEEEMKNM (92 aa)) are coil 1B. Residues 291 to 313 (QGSSGGEVTVEMNAAPGTDLTKL) form a linker 12 region. The segment at 314-452 (LNDMRAQYEE…ETYRRLLDGE (139 aa)) is coil 2. Residues 453 to 525 (GGGSSFAEFG…VSSISEVKVK (73 aa)) are tail. The disordered stretch occupies residues 459–497 (AEFGGRNSGSVNMGSRDLVSGDSRSGSCSGQGRDSSKTR). Positions 480–491 (DSRSGSCSGQGR) are enriched in polar residues.

It belongs to the intermediate filament family. Heterotetramer of two type I and two type II keratins. Highly expressed in keratinocytes, placenta, colon and spleen. Expressed at lower level in thymus and testis.

This Homo sapiens (Human) protein is Keratin, type I cytoskeletal 24 (KRT24).